The chain runs to 937 residues: ABC transporter A family member 4 (937 aa).

7 consecutive transmembrane segments (helical) span residues Leu34–Thr54, Ile340–Ile360, Phe394–Leu414, Ser423–Val443, Val455–Met475, Gly478–Tyr498, and Ala528–Tyr548. Residues Asp618 to Thr852 form the ABC transporter domain. Position 653–660 (Gly653–Thr660) interacts with ATP.

Belongs to the ABC transporter superfamily. ABCA family. CPR flippase (TC 3.A.1.211) subfamily.

The protein resides in the membrane. The protein is ABC transporter A family member 4 (ABCA4) of Arabidopsis thaliana (Mouse-ear cress).